Reading from the N-terminus, the 424-residue chain is 3-phosphoshikimate 1-carboxyvinyltransferase (424 aa).

Lysine 21, serine 22, and arginine 26 together coordinate 3-phosphoshikimate. Residue lysine 21 participates in phosphoenolpyruvate binding. Positions 91 and 119 each coordinate phosphoenolpyruvate. 3-phosphoshikimate is bound by residues serine 164, glutamine 166, aspartate 310, and lysine 337. Phosphoenolpyruvate is bound at residue glutamine 166. Aspartate 310 functions as the Proton acceptor in the catalytic mechanism. The phosphoenolpyruvate site is built by arginine 341 and arginine 382.

This sequence belongs to the EPSP synthase family. In terms of assembly, monomer.

Its subcellular location is the cytoplasm. The catalysed reaction is 3-phosphoshikimate + phosphoenolpyruvate = 5-O-(1-carboxyvinyl)-3-phosphoshikimate + phosphate. It functions in the pathway metabolic intermediate biosynthesis; chorismate biosynthesis; chorismate from D-erythrose 4-phosphate and phosphoenolpyruvate: step 6/7. In terms of biological role, catalyzes the transfer of the enolpyruvyl moiety of phosphoenolpyruvate (PEP) to the 5-hydroxyl of shikimate-3-phosphate (S3P) to produce enolpyruvyl shikimate-3-phosphate and inorganic phosphate. The protein is 3-phosphoshikimate 1-carboxyvinyltransferase of Campylobacter hominis (strain ATCC BAA-381 / DSM 21671 / CCUG 45161 / LMG 19568 / NCTC 13146 / CH001A).